The primary structure comprises 248 residues: 2,3-bisphosphoglycerate-dependent phosphoglycerate mutase (248 aa).

Residues 8 to 15, 21 to 22, Arg-60, 87 to 90, Lys-98, 114 to 115, and 183 to 184 contribute to the substrate site; these read RHGESTWN, TG, ERHY, RR, and GN. His-9 acts as the Tele-phosphohistidine intermediate in catalysis. Residue Glu-87 is the Proton donor/acceptor of the active site.

It belongs to the phosphoglycerate mutase family. BPG-dependent PGAM subfamily. As to quaternary structure, homodimer.

It catalyses the reaction (2R)-2-phosphoglycerate = (2R)-3-phosphoglycerate. It functions in the pathway carbohydrate degradation; glycolysis; pyruvate from D-glyceraldehyde 3-phosphate: step 3/5. In terms of biological role, catalyzes the interconversion of 2-phosphoglycerate and 3-phosphoglycerate. In Burkholderia vietnamiensis (strain G4 / LMG 22486) (Burkholderia cepacia (strain R1808)), this protein is 2,3-bisphosphoglycerate-dependent phosphoglycerate mutase.